Consider the following 39-residue polypeptide: Photosystem II reaction center protein L (39 aa).

A helical membrane pass occupies residues 18–38 (SLYLGLLFVFVTGVLMSSYFF).

The protein belongs to the PsbL family. As to quaternary structure, PSII is composed of 1 copy each of membrane proteins PsbA, PsbB, PsbC, PsbD, PsbE, PsbF, PsbH, PsbI, PsbJ, PsbK, PsbL, PsbM, PsbT, PsbX, PsbY, PsbZ, Psb30/Ycf12, peripheral proteins PsbO, CyanoQ (PsbQ), PsbU, PsbV and a large number of cofactors. It forms dimeric complexes.

The protein resides in the cellular thylakoid membrane. Its function is as follows. One of the components of the core complex of photosystem II (PSII). PSII is a light-driven water:plastoquinone oxidoreductase that uses light energy to abstract electrons from H(2)O, generating O(2) and a proton gradient subsequently used for ATP formation. It consists of a core antenna complex that captures photons, and an electron transfer chain that converts photonic excitation into a charge separation. This subunit is found at the monomer-monomer interface and is required for correct PSII assembly and/or dimerization. This Synechococcus sp. (strain CC9902) protein is Photosystem II reaction center protein L.